Here is a 180-residue protein sequence, read N- to C-terminus: Centromere protein M (180 aa).

As to quaternary structure, component of the CENPA-NAC complex, at least composed of CENPA, CENPC, CENPH, CENPM, CENPN, CENPT and CENPU. The CENPA-NAC complex interacts with the CENPA-CAD complex, composed of CENPI, CENPK, CENPL, CENPO, CENPP, CENPQ, CENPR and CENPS.

Its subcellular location is the nucleus. It is found in the cytoplasm. The protein localises to the chromosome. The protein resides in the centromere. It localises to the kinetochore. Functionally, component of the CENPA-NAC (nucleosome-associated) complex, a complex that plays a central role in assembly of kinetochore proteins, mitotic progression and chromosome segregation. The CENPA-NAC complex recruits the CENPA-CAD (nucleosome distal) complex and may be involved in incorporation of newly synthesized CENPA into centromeres. This Bos taurus (Bovine) protein is Centromere protein M (CENPM).